The sequence spans 269 residues: GTP cyclohydrolase FolE2 (269 aa).

The protein belongs to the GTP cyclohydrolase IV family.

The catalysed reaction is GTP + H2O = 7,8-dihydroneopterin 3'-triphosphate + formate + H(+). It functions in the pathway cofactor biosynthesis; 7,8-dihydroneopterin triphosphate biosynthesis; 7,8-dihydroneopterin triphosphate from GTP: step 1/1. Functionally, converts GTP to 7,8-dihydroneopterin triphosphate. The chain is GTP cyclohydrolase FolE2 from Burkholderia thailandensis (strain ATCC 700388 / DSM 13276 / CCUG 48851 / CIP 106301 / E264).